Here is a 405-residue protein sequence, read N- to C-terminus: CCA-adding enzyme (405 aa).

The ATP site is built by G8 and R11. CTP-binding residues include G8 and R11. Mg(2+) contacts are provided by E21 and D23. ATP-binding residues include R91, R137, and R140. R91, R137, and R140 together coordinate CTP. Residues P220 to W326 enclose the HD domain.

The protein belongs to the tRNA nucleotidyltransferase/poly(A) polymerase family. Bacterial CCA-adding enzyme type 2 subfamily. Requires Mg(2+) as cofactor.

The catalysed reaction is a tRNA precursor + 2 CTP + ATP = a tRNA with a 3' CCA end + 3 diphosphate. The enzyme catalyses a tRNA with a 3' CCA end + 2 CTP + ATP = a tRNA with a 3' CCACCA end + 3 diphosphate. Catalyzes the addition and repair of the essential 3'-terminal CCA sequence in tRNAs without using a nucleic acid template. Adds these three nucleotides in the order of C, C, and A to the tRNA nucleotide-73, using CTP and ATP as substrates and producing inorganic pyrophosphate. tRNA 3'-terminal CCA addition is required both for tRNA processing and repair. Also involved in tRNA surveillance by mediating tandem CCA addition to generate a CCACCA at the 3' terminus of unstable tRNAs. While stable tRNAs receive only 3'-terminal CCA, unstable tRNAs are marked with CCACCA and rapidly degraded. The sequence is that of CCA-adding enzyme from Hamiltonella defensa subsp. Acyrthosiphon pisum (strain 5AT).